Consider the following 270-residue polypeptide: Glucosamine-6-phosphate deaminase (270 aa).

Catalysis depends on D72, which acts as the Proton acceptor; for enolization step. D141 functions as the For ring-opening step in the catalytic mechanism. Residue H143 is the Proton acceptor; for ring-opening step of the active site. E148 acts as the For ring-opening step in catalysis.

It belongs to the glucosamine/galactosamine-6-phosphate isomerase family. NagB subfamily.

The catalysed reaction is alpha-D-glucosamine 6-phosphate + H2O = beta-D-fructose 6-phosphate + NH4(+). The protein operates within amino-sugar metabolism; N-acetylneuraminate degradation; D-fructose 6-phosphate from N-acetylneuraminate: step 5/5. Allosterically activated by N-acetylglucosamine 6-phosphate (GlcNAc6P). In terms of biological role, catalyzes the reversible isomerization-deamination of glucosamine 6-phosphate (GlcN6P) to form fructose 6-phosphate (Fru6P) and ammonium ion. This chain is Glucosamine-6-phosphate deaminase, found in Parabacteroides distasonis (strain ATCC 8503 / DSM 20701 / CIP 104284 / JCM 5825 / NCTC 11152).